The primary structure comprises 332 residues: F-box/SPRY domain-containing protein 1 (332 aa).

The disordered stretch occupies residues 1-82 (MAENDGETIV…RSPRRPEVSA (82 aa)). 2 stretches are compositionally biased toward polar residues: residues 15–28 (CNLT…SSGL) and 49–64 (NPSS…QLTP). Residues 79 to 127 (EVSASRLPLKVLNQIFQYLPLKDLRSAMLTCHSWNNALSMEDSDIWQYL) enclose the F-box domain. Residues 138 to 330 (SDPFLLAELG…VTMVYVGSPQ (193 aa)) enclose the B30.2/SPRY domain.

It belongs to the FBXO45/Fsn family. In terms of assembly, component of an SCF (SKP1-CUL1-F-box protein) E3 ubiquitin ligase complex composed of cul-1, fsn-1, rpm-1 and skr-1. Interacts (via SPRY domain) with scd-2 (via cytoplasmic domain). Interacts (via SPRY domain) with convertase egl-3 (via C-terminus). As to expression, expressed in GABAergic neuromuscular junctions (NMJs).

Its subcellular location is the synapse. It functions in the pathway protein modification; protein ubiquitination. Functionally, component of a SCF (SKP1-CUL1-F-box protein) E3 ubiquitin ligase complex which is required for the restriction and/or maturation of synapses in GABAergic neuromuscular junction (NMJ) presynaptic neurons. Promotes NRJ synapse development and synaptic transmission by negatively regulating the daf-2/InsR pathway in muscles. By targeting convertase egl-3 for degradation, negatively modulates insulin-like protein ins-4 and ins-6 processing. May stabilize synapse formation by promoting the down-regulation of scd-2. Regulates axon termination in PLM and ALM neurons. The polypeptide is F-box/SPRY domain-containing protein 1 (fsn-1) (Caenorhabditis elegans).